The following is a 352-amino-acid chain: tRNA-specific 2-thiouridylase MnmA (352 aa).

6-13 contacts ATP; that stretch reads AVSGGTDS. Cys-92 functions as the Nucleophile in the catalytic mechanism. A disulfide bond links Cys-92 and Cys-189. Gly-116 contributes to the ATP binding site. The interaction with tRNA stretch occupies residues 139–141; the sequence is KDQ. Residue Cys-189 is the Cysteine persulfide intermediate of the active site. Positions 294-295 are interaction with tRNA; it reads RY.

It belongs to the MnmA/TRMU family.

Its subcellular location is the cytoplasm. It catalyses the reaction S-sulfanyl-L-cysteinyl-[protein] + uridine(34) in tRNA + AH2 + ATP = 2-thiouridine(34) in tRNA + L-cysteinyl-[protein] + A + AMP + diphosphate + H(+). Catalyzes the 2-thiolation of uridine at the wobble position (U34) of tRNA, leading to the formation of s(2)U34. In Lawsonia intracellularis (strain PHE/MN1-00), this protein is tRNA-specific 2-thiouridylase MnmA.